The following is a 121-amino-acid chain: Large ribosomal subunit protein uL18 (121 aa).

This sequence belongs to the universal ribosomal protein uL18 family. Part of the 50S ribosomal subunit; part of the 5S rRNA/L5/L18/L25 subcomplex. Contacts the 5S and 23S rRNAs.

Its function is as follows. This is one of the proteins that bind and probably mediate the attachment of the 5S RNA into the large ribosomal subunit, where it forms part of the central protuberance. This is Large ribosomal subunit protein uL18 from Desulfotalea psychrophila (strain LSv54 / DSM 12343).